Reading from the N-terminus, the 343-residue chain is Small ribosomal subunit biogenesis GTPase RsgA (343 aa).

One can recognise a CP-type G domain in the interval 116 to 275; that stretch reads RGQLKPVAAN…LIDSPGIREF (160 aa). GTP-binding positions include 163-166 and 217-225; these read NKAD and GQSGVGKSS. Cys299, Cys304, His306, and Cys312 together coordinate Zn(2+).

The protein belongs to the TRAFAC class YlqF/YawG GTPase family. RsgA subfamily. Monomer. Associates with 30S ribosomal subunit, binds 16S rRNA. Zn(2+) is required as a cofactor.

The protein resides in the cytoplasm. Functionally, one of several proteins that assist in the late maturation steps of the functional core of the 30S ribosomal subunit. Helps release RbfA from mature subunits. May play a role in the assembly of ribosomal proteins into the subunit. Circularly permuted GTPase that catalyzes slow GTP hydrolysis, GTPase activity is stimulated by the 30S ribosomal subunit. The protein is Small ribosomal subunit biogenesis GTPase RsgA of Pseudomonas savastanoi pv. phaseolicola (strain 1448A / Race 6) (Pseudomonas syringae pv. phaseolicola (strain 1448A / Race 6)).